Here is a 203-residue protein sequence, read N- to C-terminus: Peptidyl-prolyl cis-trans isomerase FKBP11 (203 aa).

An N-terminal signal peptide occupies residues 1–29 (MTLRPSLLPLRLLLLLLLLLRGAVCQAEA). One can recognise a PPIase FKBP-type domain in the interval 59–146 (GDTLHIHYSG…HFDVELIALI (88 aa)). A helical transmembrane segment spans residues 158-178 (ILPLVGMAMVPALLGLIGYHL).

It belongs to the FKBP-type PPIase family. As to quaternary structure, interacts with IFITM5.

The protein resides in the membrane. The enzyme catalyses [protein]-peptidylproline (omega=180) = [protein]-peptidylproline (omega=0). Functionally, PPIases accelerate the folding of proteins during protein synthesis. The chain is Peptidyl-prolyl cis-trans isomerase FKBP11 (FKBP11) from Bos taurus (Bovine).